The following is a 1385-amino-acid chain: MAPGCKSELRNVTNSHSNQPSNEDDAIKVFVRIRPAEEGARSADGEQSLCLSVLSQTALRLHSNPDPKTFVFDYVAGMDTTQESVFSTVAKSIVESCMSGYNGTIFAYGQTGSGKTFTMMGPSDSDNFSHNLRGVIPRSFEYLFSLIDREKEKAGAGKSFLCKCSFIEVYNEQIYDLLDSASVGLYLREHIKKGVFVVGAVEQVVASAAEAYQVLSRGWRNRRVASTSMNRESSRSHAVFTITIESMEKSSEAVNIRTSLLNLVDLAGSERQKDTHAEGMRLKEAGNINRSLSCLGQVITALVDVGNGKQRHVCYRDSKLTFLLRDSLGGNAKTAIIANVHPGSRCFGETLSTLNFAQRAKLIKNKAVVNEDTQGNVSQLQAEVKRLREQLSQFTSGQLTPGSSLARDKEKANYMEYFLEAMLFFKKSEQEKKSLVEKITQLEDLTLKKEKFIQSNKMIVKFREDQIMRLERLQKEARGSFLPEEQDRLLSELRDEIRTLREQVEHHPRLAKYAMENHSLREENRKLKLLAPVKRAHELDAQAIARLEQAFSEVSSTETNDKGLQGLPPKAIKEPSFFTSTEKLKVQLLQIQTELNNSKQEYEEFKELTRKKQLELESELQSLQKANLNLENLLEATKVCKRQEVSQLNKIHAETLKIITTPTKAYQLCSRLVPKSSPEVGSFGFLRSQSAPDNDILNEPVPPEMSEQALEAISEELRTVQEQLSVLQVKLDEEEHKNLKLQQNVDRLEHHSTQMQELFSSERSDWSKQQQDYLTQLSDLEKQLQDAQTKNDFLKCEVHDLRIVLNSADKELSLVKLEYSTFKESQEKELSQLSERHVQVQLQLDNARLENEKLLESQACLQDSYDNLQEVMKFEVDQLSKNLQNCKQENETLKSDLHNLVELFEAEKERNNKLSLQFEEDKENSSKEILKALETVRQEKQEEMARCEKQMAKVQELEESLLAAENVVSCLEKSRESDKELVTNLMNQIQELRTSAGEKSEAIDTLKQELQDISCKYTAAVADKEESKELIRRQEVDILELKETLRLRILSEDIERDMLCEDLAHATEQLNMLTEASKKHSGLLQSAQEELTKKEALIQELQHKLNQEKEEVEQKKSEYNLKMKQLEHVMGSAPEYPQSPKTPPHFQTHLAKLLETQEQEIEDGRASKMSLQHLVTKLNEDREVKNAEILRMKDQLCEMENLRLESQQLRERTWLLQTQLDDMKRQGESSSQSRPDSQQLKNEYEEEIIRERLAKNKLIEEMLKMKTDLEEVQSALDSKEKFCHRMSEEVERTRTLESRAFQEKEQLRSKLEEMYEERERTCQEMEMLRKQLEFLAEENGKLIGHQNLHQKIQYVVRLKKENIRLAEETEKLRAENVFLKERKKE.

Residues 1–24 (MAPGCKSELRNVTNSHSNQPSNED) are disordered. The segment covering 10-21 (RNVTNSHSNQPS) has biased composition (polar residues). The Kinesin motor domain maps to 26-363 (AIKVFVRIRP…LNFAQRAKLI (338 aa)). Residue 109–116 (GQTGSGKT) participates in ATP binding. Positions 368 to 1385 (VVNEDTQGNV…NVFLKERKKE (1018 aa)) form a coiled coil. Lys-1007 is subject to N6-acetyllysine. A phosphoserine mark is found at Ser-1139 and Ser-1167. Residues 1222 to 1243 (DMKRQGESSSQSRPDSQQLKNE) form a disordered region. Residues 1228–1241 (ESSSQSRPDSQQLK) show a composition bias toward polar residues.

This sequence belongs to the TRAFAC class myosin-kinesin ATPase superfamily. Kinesin family. KLP2 subfamily. As to quaternary structure, interacts with MKI67 and TPX2. As to expression, expressed in sympathetic neurons.

The protein localises to the cytoplasm. It is found in the cytoskeleton. It localises to the spindle. Functionally, plus-end directed kinesin-like motor enzyme involved in mitotic spindle assembly. This Rattus norvegicus (Rat) protein is Kinesin-like protein KIF15 (Kif15).